Here is a 291-residue protein sequence, read N- to C-terminus: ATP synthase gamma chain (291 aa).

This sequence belongs to the ATPase gamma chain family. In terms of assembly, F-type ATPases have 2 components, CF(1) - the catalytic core - and CF(0) - the membrane proton channel. CF(1) has five subunits: alpha(3), beta(3), gamma(1), delta(1), epsilon(1). CF(0) has three main subunits: a, b and c.

It is found in the cell inner membrane. Functionally, produces ATP from ADP in the presence of a proton gradient across the membrane. The gamma chain is believed to be important in regulating ATPase activity and the flow of protons through the CF(0) complex. The sequence is that of ATP synthase gamma chain from Neisseria gonorrhoeae (strain NCCP11945).